We begin with the raw amino-acid sequence, 302 residues long: Bifunctional protein FolD (302 aa).

Residues 168-170, threonine 197, and valine 238 contribute to the NADP(+) site; that span reads GRS.

Belongs to the tetrahydrofolate dehydrogenase/cyclohydrolase family. As to quaternary structure, homodimer.

It carries out the reaction (6R)-5,10-methylene-5,6,7,8-tetrahydrofolate + NADP(+) = (6R)-5,10-methenyltetrahydrofolate + NADPH. The catalysed reaction is (6R)-5,10-methenyltetrahydrofolate + H2O = (6R)-10-formyltetrahydrofolate + H(+). The protein operates within one-carbon metabolism; tetrahydrofolate interconversion. Functionally, catalyzes the oxidation of 5,10-methylenetetrahydrofolate to 5,10-methenyltetrahydrofolate and then the hydrolysis of 5,10-methenyltetrahydrofolate to 10-formyltetrahydrofolate. The protein is Bifunctional protein FolD of Desulfatibacillum aliphaticivorans.